A 161-amino-acid chain; its full sequence is MQCPSCQHTDSRVLESRAADSGKSVRRRRECLNCEFRFTTYERVETMTITVVKRSGTRETFSRSKLLTGLVRACEKTGLETNRLELLVEEIELQLQQRNQKEITSQQLGDLVLEELGDLSEVAYVRFASVYGKFSGISDFITTLDALRQRNQVKRQLAKIS.

A zinc finger spans residues 3–34 (CPSCQHTDSRVLESRAADSGKSVRRRRECLNC). The ATP-cone domain maps to 49-139 (ITVVKRSGTR…VYGKFSGISD (91 aa)).

The protein belongs to the NrdR family. It depends on Zn(2+) as a cofactor.

Negatively regulates transcription of bacterial ribonucleotide reductase nrd genes and operons by binding to NrdR-boxes. In Synechococcus sp. (strain RCC307), this protein is Transcriptional repressor NrdR.